Reading from the N-terminus, the 259-residue chain is uncharacterized protein (259 aa).

Belongs to the methyltransferase superfamily.

This is an uncharacterized protein from Mycobacteroides abscessus (strain ATCC 19977 / DSM 44196 / CCUG 20993 / CIP 104536 / JCM 13569 / NCTC 13031 / TMC 1543 / L948) (Mycobacterium abscessus).